A 204-amino-acid chain; its full sequence is Rho GDP-dissociation inhibitor 1 (204 aa).

Residues 1-36 (MAEQEPTAEQLAQIAAENEEDEHSVNYKPPAQKSIQ) form a disordered region. Ala2 is modified (N-acetylalanine). At Ser34 the chain carries Phosphoserine. At Lys43 the chain carries N6-acetyllysine. Ser47 is subject to Phosphoserine. The interval 66 to 83 (NVPNVVVTRLTLVCSTAP) is hydrophobic. The residue at position 101 (Ser101) is a Phosphoserine; by PKA. Lys105 carries the N6-acetyllysine modification. The residue at position 115 (Ser115) is a Phosphoserine; by PKC. Position 127 is an N6-acetyllysine (Lys127). Glycyl lysine isopeptide (Lys-Gly) (interchain with G-Cter in SUMO1); alternate cross-links involve residues Lys138 and Lys141. Residues Lys138 and Lys141 each participate in a glycyl lysine isopeptide (Lys-Gly) (interchain with G-Cter in SUMO2); alternate cross-link. Lys141 carries the N6-acetyllysine; alternate modification. At Lys141 the chain carries N6-succinyllysine; alternate. Lys178 carries the N6-acetyllysine modification.

It belongs to the Rho GDI family. Monomer. Interacts with FER. Interacts with PLXNB3. Forms a heterodimer with RAC1. Interacts with RHOA, the affinity is increased by three orders of magnitude when RHOA is prenylated. Interacts with PSMD10; the interaction increases ARHGDIA association with RHOA, leading to ARHGDIA-mediated inactivation of RHOA and ROCK and prolonged AKT activation. Interacts with KANK2; the interaction is direct and may regulate the interaction of ARHGDIA with RHOA, RAC1 and CDC42. Interacts with RHOC. Interacts with CDC42. Interacts with NGFR (via death domain); NGFR binding decreases the affinity for RHOA. Brain, lung, thymus, spleen, small intestine, and kidney, and weakly in heart and liver.

The protein localises to the cytoplasm. Controls Rho proteins homeostasis. Regulates the GDP/GTP exchange reaction of the Rho proteins by inhibiting the dissociation of GDP from them, and the subsequent binding of GTP to them. Retains Rho proteins such as CDC42, RAC1 and RHOA in an inactive cytosolic pool, regulating their stability and protecting them from degradation. Actively involved in the recycling and distribution of activated Rho GTPases in the cell, mediates extraction from membranes of both inactive and activated molecules due its exceptionally high affinity for prenylated forms. Through the modulation of Rho proteins, may play a role in cell motility regulation. In glioma cells, inhibits cell migration and invasion by mediating the signals of SEMA5A and PLXNB3 that lead to inactivation of RAC1. This is Rho GDP-dissociation inhibitor 1 (ARHGDIA) from Bos taurus (Bovine).